The following is a 209-amino-acid chain: Tektin bundle-interacting protein 1 (209 aa).

In terms of assembly, microtubule inner protein component of sperm flagellar doublet microtubules.

The protein resides in the cytoplasm. It localises to the cytoskeleton. The protein localises to the cilium axoneme. Its subcellular location is the flagellum axoneme. Its function is as follows. Microtubule inner protein (MIP) part of the dynein-decorated doublet microtubules (DMTs) in cilia axoneme, which is required for motile cilia beating. Located at the center of the tektin bundle where may function to recruit tektins or stabilize the bundle. The chain is Tektin bundle-interacting protein 1 from Homo sapiens (Human).